A 67-amino-acid polypeptide reads, in one-letter code: Conotoxin Im3.1 (67 aa).

A signal peptide spans 1 to 20 (MMSTLVVLLTICLLMLPLTA). Positions 21–52 (RQLDADQLADQLAERMEDISADQNRWFDPVKR) are excised as a propeptide. 3 disulfides stabilise this stretch: Cys53–Cys63, Cys54–Cys61, and Cys59–Cys64.

It belongs to the conotoxin M superfamily. As to expression, expressed by the venom duct.

Its subcellular location is the secreted. Its function is as follows. Probable neurotoxin. This chain is Conotoxin Im3.1, found in Conus imperialis (Imperial cone).